A 239-amino-acid chain; its full sequence is Adenylate kinase 2 (239 aa).

Residue 29 to 34 coordinates ATP; that stretch reads GSGKGT. The NMP stretch occupies residues 49–78; the sequence is STGDILRAIIASGSELGQKVQKITESGGLV. Residues threonine 50, arginine 55, 76 to 78, 104 to 107, and glutamine 111 contribute to the AMP site; these read GLV and GFPR. The tract at residues 145 to 182 is LID; sequence GRLFHLASGRSYHELFNPPKVPMVDDITGDRLVHRSDD. ATP is bound by residues arginine 146 and 155 to 156; that span reads SY. Arginine 179 and arginine 190 together coordinate AMP.

Belongs to the adenylate kinase family. AK2 subfamily. Monomer. Requires Mg(2+) as cofactor.

The protein localises to the cytoplasm. It localises to the cytosol. It carries out the reaction AMP + ATP = 2 ADP. It functions in the pathway purine metabolism; purine nucleotide biosynthesis. Functionally, catalyzes the reversible transfer of the terminal phosphate group between ATP and AMP. Plays an important role in cellular energy homeostasis and in adenine nucleotide metabolism. The polypeptide is Adenylate kinase 2 (Schistosoma mansoni (Blood fluke)).